We begin with the raw amino-acid sequence, 156 residues long: FUN14 domain-containing protein 1 (156 aa).

The short motif at 19–22 is the YXXL element; that stretch reads YEVL. The next 3 helical transmembrane spans lie at 49-69, 76-96, and 135-155; these read YSVATQIVMGGVTGWCAGFLF, AATAVGGGFLLLQIASHSGYV, and FIKQNIVVSSGFVGGFLLGLA.

It belongs to the FUN14 family.

It localises to the mitochondrion outer membrane. In terms of biological role, acts as an activator of hypoxia-induced mitophagy, an important mechanism for mitochondrial quality control. The protein is FUN14 domain-containing protein 1 (FUNDC1) of Gallus gallus (Chicken).